We begin with the raw amino-acid sequence, 597 residues long: Formate--tetrahydrofolate ligase (597 aa).

Residue 84 to 91 (TPLGEGKS) coordinates ATP.

Belongs to the formate--tetrahydrofolate ligase family.

The enzyme catalyses (6S)-5,6,7,8-tetrahydrofolate + formate + ATP = (6R)-10-formyltetrahydrofolate + ADP + phosphate. Its pathway is one-carbon metabolism; tetrahydrofolate interconversion. The sequence is that of Formate--tetrahydrofolate ligase from Dehalococcoides mccartyi (strain ATCC BAA-2266 / KCTC 15142 / 195) (Dehalococcoides ethenogenes (strain 195)).